The following is a 1390-amino-acid chain: DNA-directed RNA polymerase subunit beta'' (1390 aa).

Zn(2+)-binding residues include Cys-224, Cys-295, Cys-302, and Cys-305.

This sequence belongs to the RNA polymerase beta' chain family. RpoC2 subfamily. In plastids the minimal PEP RNA polymerase catalytic core is composed of four subunits: alpha, beta, beta', and beta''. When a (nuclear-encoded) sigma factor is associated with the core the holoenzyme is formed, which can initiate transcription. Requires Zn(2+) as cofactor.

It is found in the plastid. It localises to the chloroplast. The enzyme catalyses RNA(n) + a ribonucleoside 5'-triphosphate = RNA(n+1) + diphosphate. DNA-dependent RNA polymerase catalyzes the transcription of DNA into RNA using the four ribonucleoside triphosphates as substrates. The sequence is that of DNA-directed RNA polymerase subunit beta'' from Daucus carota (Wild carrot).